The primary structure comprises 288 residues: MDKLIKTISESGSFRAYALDSTETVRTAQEKHNTLSSSTVALGRTLIANQILAANQKGDSKITVKVIGNGSFGHIISVADTKGHVKGYIQNPGVDIKKTATGEVLVGPFMGQGQFVSIIDYGTGNPYTSSTPLISGEIGEDFAYYLTESEQTPSAVGLNVLLDKEDKVKVAGGFMLQVLPGASEEEIARYEKRIQEMPAISTLLESDDHIEALLNAIYGDEPFKRLSEEELSFECDCSRERFENALLTLGKDELQAMKDEDHGAEIVCQFCQTKYEFSEADLEELIND.

2 cysteine pairs are disulfide-bonded: Cys235/Cys237 and Cys268/Cys271.

It belongs to the HSP33 family. Post-translationally, under oxidizing conditions two disulfide bonds are formed involving the reactive cysteines. Under reducing conditions zinc is bound to the reactive cysteines and the protein is inactive.

The protein localises to the cytoplasm. Functionally, redox regulated molecular chaperone. Protects both thermally unfolding and oxidatively damaged proteins from irreversible aggregation. Plays an important role in the bacterial defense system toward oxidative stress. This is 33 kDa chaperonin from Streptococcus thermophilus (strain ATCC BAA-491 / LMD-9).